Consider the following 442-residue polypeptide: Capsid vertex component 1 (442 aa).

The protein belongs to the herpesviridae CVC1 protein family. In terms of assembly, interacts (via C-terminus) with capsid vertex component 2/CVC2.

The protein localises to the virion. Its subcellular location is the host nucleus. Functionally, capsid vertex-specific component that plays a role during viral DNA encapsidation, assuring correct genome cleavage and presumably stabilizing capsids that contain full-length viral genomes. The chain is Capsid vertex component 1 from Human herpesvirus 6A (strain Uganda-1102) (HHV-6 variant A).